Reading from the N-terminus, the 130-residue chain is Small ribosomal subunit protein uS9 (130 aa).

The protein belongs to the universal ribosomal protein uS9 family.

The sequence is that of Small ribosomal subunit protein uS9 from Janthinobacterium sp. (strain Marseille) (Minibacterium massiliensis).